Reading from the N-terminus, the 326-residue chain is Vitamin B12 import system permease protein BtuC (326 aa).

The next 9 helical transmembrane spans lie at 19–39, 61–81, 88–108, 112–132, 146–166, 184–204, 240–260, 274–294, and 302–322; these read LSVL…LWIL, LAVL…QALF, PGLL…VLLG, LPNW…TLIL, LLAG…AIYF, GGVD…LLWI, GWMV…GLVI, VLLP…DIVA, and ELPI…WLLL.

The protein belongs to the binding-protein-dependent transport system permease family. FecCD subfamily. In terms of assembly, the complex is composed of two ATP-binding proteins (BtuD), two transmembrane proteins (BtuC) and a solute-binding protein (BtuF).

Its subcellular location is the cell inner membrane. Functionally, part of the ABC transporter complex BtuCDF involved in vitamin B12 import. Involved in the translocation of the substrate across the membrane. This Escherichia coli O6:K15:H31 (strain 536 / UPEC) protein is Vitamin B12 import system permease protein BtuC.